A 475-amino-acid chain; its full sequence is Aspartyl/glutamyl-tRNA(Asn/Gln) amidotransferase subunit B (475 aa).

The protein belongs to the GatB/GatE family. GatB subfamily. Heterotrimer of A, B and C subunits.

The catalysed reaction is L-glutamyl-tRNA(Gln) + L-glutamine + ATP + H2O = L-glutaminyl-tRNA(Gln) + L-glutamate + ADP + phosphate + H(+). It carries out the reaction L-aspartyl-tRNA(Asn) + L-glutamine + ATP + H2O = L-asparaginyl-tRNA(Asn) + L-glutamate + ADP + phosphate + 2 H(+). Its function is as follows. Allows the formation of correctly charged Asn-tRNA(Asn) or Gln-tRNA(Gln) through the transamidation of misacylated Asp-tRNA(Asn) or Glu-tRNA(Gln) in organisms which lack either or both of asparaginyl-tRNA or glutaminyl-tRNA synthetases. The reaction takes place in the presence of glutamine and ATP through an activated phospho-Asp-tRNA(Asn) or phospho-Glu-tRNA(Gln). In Clostridium novyi (strain NT), this protein is Aspartyl/glutamyl-tRNA(Asn/Gln) amidotransferase subunit B.